A 986-amino-acid polypeptide reads, in one-letter code: LRR receptor-like serine/threonine-protein kinase ER2 (986 aa).

A signal peptide spans 1 to 21 (MTTTTTTRLLLAAILLAVAAA). The Extracellular portion of the chain corresponds to 22–581 (DDDGQTLLEI…VQRSSVSRSA (560 aa)). Residues N64 and N73 are each glycosylated (N-linked (GlcNAc...) asparagine). LRR repeat units lie at residues 68-89 (AVAA…AIGN), 90-114 (LKSV…IGDC), 116-138 (SLKT…ISKL), 139-161 (KHLE…TLSQ), 162-186 (LPNL…IYWN), 188-210 (VLQY…MCQL), 211-233 (TGLW…TIGN), 234-259 (CTSF…GFLQ), 261-280 (ATLS…VIGL), 281-304 (MQAL…ILGN), 306-329 (TYTE…LGNM), 330-352 (STLH…ELGK), 354-377 (TGLF…ISSC), 379-401 (NLIS…LHKL), 402-425 (ESIT…LAKM), 427-449 (NLDT…IGSL), 450-472 (EHLL…EFGN), 473-498 (LRSI…GMLQ), 500-520 (LILL…LINC), and 521-545 (FSLN…NFSR). N-linked (GlcNAc...) asparagine glycans are attached at residues N220 and N233. 3 N-linked (GlcNAc...) asparagine glycosylation sites follow: N269, N304, and N328. 3 N-linked (GlcNAc...) asparagine glycosylation sites follow: N373, N391, and N408. N456 carries N-linked (GlcNAc...) asparagine glycosylation. N509, N527, and N542 each carry an N-linked (GlcNAc...) asparagine glycan. Residues 582–602 (ILGIAVAGLVILLMILAAACW) form a helical membrane-spanning segment. Over 603–986 (PHWAQVPKDV…FGEVISQNTE (384 aa)) the chain is Cytoplasmic. Residues 653-934 (LSEKYIIGYG…YPDPPSKPAL (282 aa)) form the Protein kinase domain. ATP contacts are provided by residues 659-667 (IGYGASSTV) and K681. D779 serves as the catalytic Proton acceptor.

The protein belongs to the protein kinase superfamily. Ser/Thr protein kinase family.

The protein localises to the cell membrane. The enzyme catalyses L-seryl-[protein] + ATP = O-phospho-L-seryl-[protein] + ADP + H(+). It catalyses the reaction L-threonyl-[protein] + ATP = O-phospho-L-threonyl-[protein] + ADP + H(+). Functionally, receptor kinase that may be involved in the regulation of cell proliferation and cell growth. The sequence is that of LRR receptor-like serine/threonine-protein kinase ER2 from Oryza sativa subsp. japonica (Rice).